The chain runs to 227 residues: Cytochrome c oxidase subunit 2 (227 aa).

At 1–14 (MAYPAQMGFQDATS) the chain is on the mitochondrial intermembrane side. A helical membrane pass occupies residues 15–45 (PIMEELLYFHDHTLMIVFMISSLVLYTISLM). Residues 46–59 (LTTSLTHTNTMNAQ) are Mitochondrial matrix-facing. Residues 60–87 (EVETVWTILPAIICILIALPSLRILYMM) form a helical membrane-spanning segment. Residues 88-227 (DEINNPSLTI…YFEKWLLTML (140 aa)) lie on the Mitochondrial intermembrane side of the membrane. Cu cation is bound by residues histidine 161, cysteine 196, glutamate 198, cysteine 200, histidine 204, and methionine 207. Residue glutamate 198 participates in Mg(2+) binding. Tyrosine 218 bears the Phosphotyrosine mark.

This sequence belongs to the cytochrome c oxidase subunit 2 family. As to quaternary structure, component of the cytochrome c oxidase (complex IV, CIV), a multisubunit enzyme composed of 14 subunits. The complex is composed of a catalytic core of 3 subunits MT-CO1, MT-CO2 and MT-CO3, encoded in the mitochondrial DNA, and 11 supernumerary subunits COX4I, COX5A, COX5B, COX6A, COX6B, COX6C, COX7A, COX7B, COX7C, COX8 and NDUFA4, which are encoded in the nuclear genome. The complex exists as a monomer or a dimer and forms supercomplexes (SCs) in the inner mitochondrial membrane with NADH-ubiquinone oxidoreductase (complex I, CI) and ubiquinol-cytochrome c oxidoreductase (cytochrome b-c1 complex, complex III, CIII), resulting in different assemblies (supercomplex SCI(1)III(2)IV(1) and megacomplex MCI(2)III(2)IV(2)). Found in a complex with TMEM177, COA6, COX18, COX20, SCO1 and SCO2. Interacts with TMEM177 in a COX20-dependent manner. Interacts with COX20. Interacts with COX16. Cu cation is required as a cofactor.

It localises to the mitochondrion inner membrane. The enzyme catalyses 4 Fe(II)-[cytochrome c] + O2 + 8 H(+)(in) = 4 Fe(III)-[cytochrome c] + 2 H2O + 4 H(+)(out). Functionally, component of the cytochrome c oxidase, the last enzyme in the mitochondrial electron transport chain which drives oxidative phosphorylation. The respiratory chain contains 3 multisubunit complexes succinate dehydrogenase (complex II, CII), ubiquinol-cytochrome c oxidoreductase (cytochrome b-c1 complex, complex III, CIII) and cytochrome c oxidase (complex IV, CIV), that cooperate to transfer electrons derived from NADH and succinate to molecular oxygen, creating an electrochemical gradient over the inner membrane that drives transmembrane transport and the ATP synthase. Cytochrome c oxidase is the component of the respiratory chain that catalyzes the reduction of oxygen to water. Electrons originating from reduced cytochrome c in the intermembrane space (IMS) are transferred via the dinuclear copper A center (CU(A)) of subunit 2 and heme A of subunit 1 to the active site in subunit 1, a binuclear center (BNC) formed by heme A3 and copper B (CU(B)). The BNC reduces molecular oxygen to 2 water molecules using 4 electrons from cytochrome c in the IMS and 4 protons from the mitochondrial matrix. The polypeptide is Cytochrome c oxidase subunit 2 (MT-CO2) (Daubentonia madagascariensis (Aye-aye)).